Here is a 319-residue protein sequence, read N- to C-terminus: GTPase Era (319 aa).

Residues 9-196 (RSGVSLIIGR…MRTLRDLLPE (188 aa)) form the Era-type G domain. The tract at residues 17 to 24 (GRPSSGKS) is G1. 17–24 (GRPSSGKS) contributes to the GTP binding site. Positions 43 to 47 (QTTRN) are G2. A G3 region spans residues 64 to 67 (DTPG). Residues 64–68 (DTPGY) and 127–130 (NKVD) each bind GTP. Residues 127–130 (NKVD) form a G4 region. The tract at residues 175–177 (ISA) is G5. One can recognise a KH type-2 domain in the interval 227 to 303 (CRDELPHALY…HISLDIRVKV (77 aa)).

It belongs to the TRAFAC class TrmE-Era-EngA-EngB-Septin-like GTPase superfamily. Era GTPase family. As to quaternary structure, monomer.

The protein localises to the cytoplasm. It is found in the cell inner membrane. Its function is as follows. An essential GTPase that binds both GDP and GTP, with rapid nucleotide exchange. Plays a role in 16S rRNA processing and 30S ribosomal subunit biogenesis and possibly also in cell cycle regulation and energy metabolism. The protein is GTPase Era of Treponema pallidum (strain Nichols).